The following is a 381-amino-acid chain: Cytochrome b (381 aa).

Helical transmembrane passes span 34-54 (FGSL…FLAM), 78-99 (WLIR…YFHI), 114-134 (WNIG…GYVL), and 179-199 (FFAF…IHVL). Heme b is bound by residues histidine 84 and histidine 98. Heme b-binding residues include histidine 183 and histidine 197. Histidine 202 contributes to the a ubiquinone binding site. The next 4 membrane-spanning stretches (helical) occupy residues 227 to 247 (YKDA…ALFL), 289 to 309 (LGGV…PFLH), 321 to 341 (LTQI…WIGG), and 348 to 368 (FILI…IALP).

Belongs to the cytochrome b family. As to quaternary structure, the cytochrome bc1 complex contains 3 respiratory subunits (MT-CYB, CYC1 and UQCRFS1), 2 core proteins (UQCRC1 and UQCRC2) and probably 6 low-molecular weight proteins. Requires heme b as cofactor.

Its subcellular location is the mitochondrion inner membrane. Its function is as follows. Component of the ubiquinol-cytochrome c reductase complex (complex III or cytochrome b-c1 complex) that is part of the mitochondrial respiratory chain. The b-c1 complex mediates electron transfer from ubiquinol to cytochrome c. Contributes to the generation of a proton gradient across the mitochondrial membrane that is then used for ATP synthesis. This is Cytochrome b (mt-cyb) from Isurus oxyrinchus (Shortfin mako shark).